The primary structure comprises 309 residues: UDP-N-acetylenolpyruvoylglucosamine reductase (309 aa).

In terms of domain architecture, FAD-binding PCMH-type spans 34–221 (RVGGPAQVLF…TAAREAAQPI (188 aa)). The active site involves R179. The active-site Proton donor is S228. The active site involves E298.

It belongs to the MurB family. FAD is required as a cofactor.

The protein localises to the cytoplasm. It carries out the reaction UDP-N-acetyl-alpha-D-muramate + NADP(+) = UDP-N-acetyl-3-O-(1-carboxyvinyl)-alpha-D-glucosamine + NADPH + H(+). It functions in the pathway cell wall biogenesis; peptidoglycan biosynthesis. Cell wall formation. This chain is UDP-N-acetylenolpyruvoylglucosamine reductase, found in Methylorubrum extorquens (strain PA1) (Methylobacterium extorquens).